A 115-amino-acid chain; its full sequence is Large ribosomal subunit protein bL20 (115 aa).

It belongs to the bacterial ribosomal protein bL20 family.

Its function is as follows. Binds directly to 23S ribosomal RNA and is necessary for the in vitro assembly process of the 50S ribosomal subunit. It is not involved in the protein synthesizing functions of that subunit. The chain is Large ribosomal subunit protein bL20 from Prochlorococcus marinus (strain MIT 9515).